Reading from the N-terminus, the 167-residue chain is uncharacterized protein (167 aa).

The disordered stretch occupies residues 1–21 (MFDFSFPTPASAGTRMGPASC).

This is an uncharacterized protein from Homo sapiens (Human).